A 360-amino-acid chain; its full sequence is MSELETLERTLLADIDAAADEGAIEALRVGALGKKGSISELLKTLGTMSPEERQTRGARINALKNIVTEAISARKLALKDAAIAERLARETVDISLPVRSSPAERGRIHPISQIVDEITAIFGDMGFSIAEGPDIETDYYNFTALNFPEGHPAREMHDTFFFQPDENGERKVLRTHTSPVQIRTMEAEKPPIRIIIPGKTYRQDSDATHSPMFHQVEGLVIDKTANVANMRWVLEEFCKAFFEVDQVTMRFRPSFFPFTEPSFEVDIQCDRSGPIVKFGEGKDWMEILGCGMVHPNVLRAGGLDPDEYQGFAWGMGLDRIAMLKYGMPDLRDFFNADVRWMTHYGFRPLDMPTLFGGLSA.

Mg(2+) is bound at residue glutamate 260.

This sequence belongs to the class-II aminoacyl-tRNA synthetase family. Phe-tRNA synthetase alpha subunit type 1 subfamily. In terms of assembly, tetramer of two alpha and two beta subunits. Mg(2+) serves as cofactor.

Its subcellular location is the cytoplasm. The catalysed reaction is tRNA(Phe) + L-phenylalanine + ATP = L-phenylalanyl-tRNA(Phe) + AMP + diphosphate + H(+). The protein is Phenylalanine--tRNA ligase alpha subunit of Sinorhizobium fredii (strain NBRC 101917 / NGR234).